Reading from the N-terminus, the 162-residue chain is Interleukin-2 (162 aa).

An N-terminal signal peptide occupies residues 1–20; the sequence is MYKIQLLSCIALTLALVANG. A glycan (O-linked (GalNAc...) threonine) is linked at Thr-23. Asn-70 carries an N-linked (GlcNAc...) asparagine glycan. An intrachain disulfide couples Cys-79 to Cys-134.

Belongs to the IL-2 family.

It is found in the secreted. In terms of biological role, cytokine produced by activated CD4-positive helper T-cells and to a lesser extend activated CD8-positive T-cells and natural killer (NK) cells that plays pivotal roles in the immune response and tolerance. Binds to a receptor complex composed of either the high-affinity trimeric IL-2R (IL2RA/CD25, IL2RB/CD122 and IL2RG/CD132) or the low-affinity dimeric IL-2R (IL2RB and IL2RG). Interaction with the receptor leads to oligomerization and conformation changes in the IL-2R subunits resulting in downstream signaling starting with phosphorylation of JAK1 and JAK3. In turn, JAK1 and JAK3 phosphorylate the receptor to form a docking site leading to the phosphorylation of several substrates including STAT5. This process leads to activation of several pathways including STAT, phosphoinositide-3-kinase/PI3K and mitogen-activated protein kinase/MAPK pathways. Functions as a T-cell growth factor and can increase NK-cell cytolytic activity as well. Promotes strong proliferation of activated B-cells and subsequently immunoglobulin production. Plays a pivotal role in regulating the adaptive immune system by controlling the survival and proliferation of regulatory T-cells, which are required for the maintenance of immune tolerance. Moreover, participates in the differentiation and homeostasis of effector T-cell subsets, including Th1, Th2, Th17 as well as memory CD8-positive T-cells. The sequence is that of Interleukin-2 (IL2) from Cervus elaphus (Red deer).